Here is a 358-residue protein sequence, read N- to C-terminus: Heme A synthase (358 aa).

The next 8 membrane-spanning stretches (helical) occupy residues 22–42, 107–127, 139–159, 173–193, 208–228, 269–289, 302–322, and 324–344; these read IQVW…VGGA, ILGR…WATK, IVPI…ASGI, AFHL…SRGF, FAGW…LVAG, FIHR…AFYV, AFFI…TLLR, and VPIG…CFSV. Heme is bound at residue H271. Residue H332 coordinates heme.

Belongs to the COX15/CtaA family. Type 2 subfamily. In terms of assembly, interacts with CtaB. Heme b serves as cofactor.

The protein localises to the cell membrane. The catalysed reaction is Fe(II)-heme o + 2 A + H2O = Fe(II)-heme a + 2 AH2. Its pathway is porphyrin-containing compound metabolism; heme A biosynthesis; heme A from heme O: step 1/1. Its function is as follows. Catalyzes the conversion of heme O to heme A by two successive hydroxylations of the methyl group at C8. The first hydroxylation forms heme I, the second hydroxylation results in an unstable dihydroxymethyl group, which spontaneously dehydrates, resulting in the formyl group of heme A. This chain is Heme A synthase, found in Bartonella quintana (strain Toulouse) (Rochalimaea quintana).